The chain runs to 423 residues: Probable M18 family aminopeptidase 2 (423 aa).

Residues H84, H157, and H397 each coordinate Zn(2+).

It belongs to the peptidase M18 family. It depends on Zn(2+) as a cofactor.

This Borreliella burgdorferi (strain ATCC 35210 / DSM 4680 / CIP 102532 / B31) (Borrelia burgdorferi) protein is Probable M18 family aminopeptidase 2 (apeB).